The chain runs to 1027 residues: Circadian locomoter output cycles protein kaput (1027 aa).

In terms of domain architecture, bHLH spans 15 to 65 (LCRKSRNLSEKKRRDQFNSLVNDLSALISTSSRKMDKSTVLKSTIAFLKNH). PAS domains follow at residues 88–160 (NDEY…VIEP) and 255–321 (REMS…ELRQ). Disordered regions lie at residues 377-402 (RKEG…ASTG), 443-575 (TSPA…QQLQ), 765-800 (QQMM…TQQQ), 869-911 (TINP…NNED), and 926-1027 (SINF…GSSQ). Over residues 383–402 (SGNSNSITNNGSSKVIASTG) the composition is skewed to low complexity. Polar residues predominate over residues 443–486 (TSPAVDSSPMWSASAVQPSGSCQINPLKTSRPASSYGNISSTGI). Composition is skewed to low complexity over residues 504 to 516 (SDST…SVTS) and 552 to 575 (QQQQ…QQLQ). Residues 780-1027 (QHNLQQQHQS…SPHTAPGSSQ (248 aa)) form an implicated in the circadian rhythmicity region. 2 stretches are compositionally biased toward low complexity: residues 871-909 (NPFN…QNNN) and 951-995 (SGSN…NQNQ). Polar residues predominate over residues 1006–1027 (QMSQEQSQNLFNSPHTAPGSSQ).

In terms of assembly, efficient DNA binding requires dimerization with another bHLH protein. Forms a heterodimer with Cycle. In terms of tissue distribution, widely expressed. Found in head, body, and appendage fractions.

Its subcellular location is the nucleus. Circadian regulator that acts as a transcription factor and generates a rhythmic output with a period of about 24 hours. Oscillates in antiphase to the cycling observed for period (PER) and timeless (TIM). According to PubMed:9742131, reaches peak abundance within several hours of the dark-light transition at ZT0 (zeitgeber 0), whereas PubMed:9616122 describes bimodal oscillating expression with maximum at ZT5 and ZT23. Clock-cycle heterodimers activate cycling transcription of PER and TIM by binding to the E-box (5'-CACGTG-3') present in their promoters. Once induced, Period and Timeless block Clock's ability to transactivate their promoters. In Drosophila melanogaster (Fruit fly), this protein is Circadian locomoter output cycles protein kaput (Clk).